A 283-amino-acid polypeptide reads, in one-letter code: Nucleotide-binding protein Hore_15880 (283 aa).

An ATP-binding site is contributed by 8-15 (GMSGAGKS). 57–60 (DIRG) is a binding site for GTP.

The protein belongs to the RapZ-like family.

In terms of biological role, displays ATPase and GTPase activities. This chain is Nucleotide-binding protein Hore_15880, found in Halothermothrix orenii (strain H 168 / OCM 544 / DSM 9562).